The following is a 183-amino-acid chain: Adenylate kinase (183 aa).

ATP is bound at residue 12–17 (GAGKGT). The interval 32–61 (STGDLLRSEVSAGSALGQEAEAVMNRGELV) is NMP. AMP contacts are provided by residues Thr-33, Arg-38, 59–61 (ELV), 86–89 (GFPR), and Gln-93. An LID region spans residues 127–133 (ARGRADD). Arg-128 lines the ATP pocket. AMP contacts are provided by Arg-130 and Arg-141. Gly-169 lines the ATP pocket.

The protein belongs to the adenylate kinase family. Monomer.

It localises to the cytoplasm. It catalyses the reaction AMP + ATP = 2 ADP. The protein operates within purine metabolism; AMP biosynthesis via salvage pathway; AMP from ADP: step 1/1. Catalyzes the reversible transfer of the terminal phosphate group between ATP and AMP. Plays an important role in cellular energy homeostasis and in adenine nucleotide metabolism. The chain is Adenylate kinase from Synechococcus sp. (strain WH7803).